Reading from the N-terminus, the 152-residue chain is Ninjurin-1 (152 aa).

Methionine 1 is modified (N-acetylmethionine). Residues 1–10 show a composition bias toward acidic residues; that stretch reads MESGTEEYEL. A disordered region spans residues 1 to 29; sequence MESGTEEYELNGDLRPGSPGSPDALPPRW. The Extracellular segment spans residues 1 to 78; sequence MESGTEEYEL…EQGNDFAFFV (78 aa). Phosphoserine is present on residues serine 18 and serine 21. The tract at residues 26 to 37 is N-terminal adhesion motif; it reads PPRWGLRNRPIN. Residues 40-69 form a required to induce plasma membrane rupture region; that stretch reads HYANKKSAAESMLDIALLMANASQLKAVVE. The segment at 44–55 is helix alpha1; the sequence is KKSAAESMLDIA. Residues 58 to 74 form a helix alpha2 region; sequence MANASQLKAVVEQGNDF. Residue asparagine 60 is glycosylated (N-linked (GlcNAc...) asparagine). A helical membrane pass occupies residues 79-103; that stretch reads PLVVLISISLVLQIGVGVLLIFLVK. Residues 104-113 lie on the Cytoplasmic side of the membrane; the sequence is YDLNNPAKHA. Residues 114-138 traverse the membrane as a helical segment; sequence KLDFLNNLATGLVFIIVVVNIFITA. Residues 139–152 are Extracellular-facing; sequence FGVQKPVMDVAPRQ.

This sequence belongs to the ninjurin family. In terms of assembly, homodimer; in absence of death stimuli, forms an inactive homodimer. Homooligomer; in response to death stimuli, homooligomerizes into long, highly branched filaments and large, ring-shaped structures in the membrane. Post-translationally, cleaved by MMP9 protease to generate the Secreted ninjurin-1 form. In terms of processing, N-linked glycosylation is required for homooligomerization.

It localises to the cell membrane. The protein localises to the synaptic cell membrane. Its subcellular location is the secreted. In response to death stimuli, homooligomerizes and disrupts membrane integrity by introducing the hydrophilic faces of alpha1 and alpha2 helices into the hydrophobic membrane. Homooligomerization and ability to mediate plasma membrane rupture is inhibited by glycine; it is unclear whether glycine directly or indirectly inhibits homooligomerization. In normal conditions, NINJ1 is autoinhibited via formation of a homodimer: in the inactive homodimer, the alpha1 and alpha2 helices (residues 44-74) form a single transmembrane region without a kink, in which hydrophilic faces of alpha1 and alpha2 helices are sequestered. Its function is as follows. Effector of various programmed cell death, such as pyroptosis and necroptosis, which mediates plasma membrane rupture (cytolysis). Oligomerizes in response to death stimuli and forms ring-like structures on the plasma membrane: acts by cutting and shedding membrane disks, like a cookie cutter, leading to membrane damage and loss that cannot be repaired by the cell. Plasma membrane rupture leads to release intracellular molecules named damage-associated molecular patterns (DAMPs) that propagate the inflammatory response. Mechanistically, mediates plasma membrane rupture by introducing hydrophilic faces of 2 alpha helices into the hydrophobic membrane. Induces plasma membrane rupture downstream of Gasdermin (GSDMA, GSDMB, GSDMC, GSDMD, or GSDME) or MLKL during pyroptosis or necroptosis, respectively. Acts as an effector of PANoptosis downstream of CASP1, CASP4, CASP8 and RIPK3. Also induces plasma membrane rupture in response to cell swelling caused by osmotic stress and ferroptosis downstream of lipid peroxidation. Acts as a regulator of Toll-like receptor 4 (TLR4) signaling triggered by lipopolysaccharide (LPS) during systemic inflammation; directly binds LPS. Involved in leukocyte migration during inflammation by promoting transendothelial migration of macrophages via homotypic binding. Promotes the migration of monocytes across the brain endothelium to central nervous system inflammatory lesions. Also acts as a homophilic transmembrane adhesion molecule involved in various processes such as axonal growth, cell chemotaxis and angiogenesis. Promotes cell adhesion by mediating homophilic interactions via its extracellular N-terminal adhesion motif (N-NAM). Involved in the progression of the inflammatory stress by promoting cell-to-cell interactions between immune cells and endothelial cells. Plays a role in nerve regeneration by promoting maturation of Schwann cells. Acts as a regulator of angiogenesis. Promotes the formation of new vessels by mediating the interaction between capillary pericyte cells and endothelial cells. Also mediates vascular functions in penile tissue as well as vascular formation. Promotes osteoclasts development by enhancing the survival of prefusion osteoclasts. Also involved in striated muscle growth and differentiation. Also involved in cell senescence in a p53/TP53 manner, possibly by acting as an indirect regulator of p53/TP53 mRNA translation. Secreted form generated by cleavage, which has chemotactic activity. Acts as an anti-inflammatory mediator by promoting monocyte recruitment, thereby ameliorating atherosclerosis. In Mus musculus (Mouse), this protein is Ninjurin-1.